The following is a 419-amino-acid chain: Zinc metalloprotease RasP (419 aa).

The next 4 helical transmembrane spans lie at 4–24 (VIAF…GHLI), 173–193 (IAAG…MLGL), 349–369 (LAAF…PALD), and 391–411 (EAFV…VVTW). His18 is a Zn(2+) binding site. Residue Glu19 is part of the active site. His22 contacts Zn(2+). The 86-residue stretch at 184-269 (AYVILVMLGL…KLTKYVTPEA (86 aa)) folds into the PDZ domain.

Belongs to the peptidase M50B family. It depends on Zn(2+) as a cofactor.

The protein resides in the cell membrane. In terms of biological role, is responsible for Site-2 cleavage of the RsiW anti-sigma factor. This results, after a third proteolytic step catalyzed by the ClpXP protease, in the release of SigW and the transcription activation of the genes under the control of the sigma-W factor. The polypeptide is Zinc metalloprotease RasP (rasP) (Bacillus licheniformis (strain ATCC 14580 / DSM 13 / JCM 2505 / CCUG 7422 / NBRC 12200 / NCIMB 9375 / NCTC 10341 / NRRL NRS-1264 / Gibson 46)).